The following is a 230-amino-acid chain: RNA polymerase sigma factor FliA (230 aa).

Positions 6–78 are sigma-70 factor domain-2; sequence LWQRYVPLVR…MLDELRSRDW (73 aa). Residues 33–36 carry the Interaction with polymerase core subunit RpoC motif; sequence DLLQ. The tract at residues 86-156 is sigma-70 factor domain-3; sequence NAREVASAMQ…VEPMLEGHED (71 aa). Positions 175–223 are sigma-70 factor domain-4; the sequence is AIEALPEREKMVLTLYYQEELNLKEIGAVLEVGESRVSQLHSQAIKRLR. The segment at residues 197-216 is a DNA-binding region (H-T-H motif); that stretch reads LKEIGAVLEVGESRVSQLHS.

Belongs to the sigma-70 factor family. FliA subfamily.

It is found in the cytoplasm. Its function is as follows. Sigma factors are initiation factors that promote the attachment of RNA polymerase to specific initiation sites and are then released. This sigma factor controls the expression of flagella-related genes. The protein is RNA polymerase sigma factor FliA of Yersinia enterocolitica.